Consider the following 208-residue polypeptide: Thiamine-phosphate synthase (208 aa).

4-amino-2-methyl-5-(diphosphooxymethyl)pyrimidine contacts are provided by residues 38 to 42 (QYRSK) and Asn70. Mg(2+)-binding residues include Asp71 and Asp90. 4-amino-2-methyl-5-(diphosphooxymethyl)pyrimidine is bound at residue Thr109. 136-138 (SAT) contacts 2-[(2R,5Z)-2-carboxy-4-methylthiazol-5(2H)-ylidene]ethyl phosphate. Residue Lys139 participates in 4-amino-2-methyl-5-(diphosphooxymethyl)pyrimidine binding. Residues Gly166 and 186–187 (VS) contribute to the 2-[(2R,5Z)-2-carboxy-4-methylthiazol-5(2H)-ylidene]ethyl phosphate site.

The protein belongs to the thiamine-phosphate synthase family. It depends on Mg(2+) as a cofactor.

It carries out the reaction 2-[(2R,5Z)-2-carboxy-4-methylthiazol-5(2H)-ylidene]ethyl phosphate + 4-amino-2-methyl-5-(diphosphooxymethyl)pyrimidine + 2 H(+) = thiamine phosphate + CO2 + diphosphate. The enzyme catalyses 2-(2-carboxy-4-methylthiazol-5-yl)ethyl phosphate + 4-amino-2-methyl-5-(diphosphooxymethyl)pyrimidine + 2 H(+) = thiamine phosphate + CO2 + diphosphate. It catalyses the reaction 4-methyl-5-(2-phosphooxyethyl)-thiazole + 4-amino-2-methyl-5-(diphosphooxymethyl)pyrimidine + H(+) = thiamine phosphate + diphosphate. The protein operates within cofactor biosynthesis; thiamine diphosphate biosynthesis; thiamine phosphate from 4-amino-2-methyl-5-diphosphomethylpyrimidine and 4-methyl-5-(2-phosphoethyl)-thiazole: step 1/1. Functionally, condenses 4-methyl-5-(beta-hydroxyethyl)thiazole monophosphate (THZ-P) and 2-methyl-4-amino-5-hydroxymethyl pyrimidine pyrophosphate (HMP-PP) to form thiamine monophosphate (TMP). The protein is Thiamine-phosphate synthase of Aromatoleum aromaticum (strain DSM 19018 / LMG 30748 / EbN1) (Azoarcus sp. (strain EbN1)).